The sequence spans 318 residues: Cobalamin biosynthesis protein CobD (318 aa).

Helical transmembrane passes span 51-71 (VGGV…AWGA), 77-97 (LVHP…CLAA), 153-173 (DGVI…ALAY), 206-226 (LIPA…AGLS), and 296-316 (MYGA…ILTI).

Belongs to the CobD/CbiB family.

The protein resides in the cell membrane. The protein operates within cofactor biosynthesis; adenosylcobalamin biosynthesis. In terms of biological role, converts cobyric acid to cobinamide by the addition of aminopropanol on the F carboxylic group. This Geobacter metallireducens (strain ATCC 53774 / DSM 7210 / GS-15) protein is Cobalamin biosynthesis protein CobD.